A 212-amino-acid polypeptide reads, in one-letter code: Putative protein phosphatase 2C 53 (212 aa).

The region spanning 1-208 (MEDRFSAITN…DDISVMLIPL (208 aa)) is the PPM-type phosphatase domain. D199 contributes to the Mn(2+) binding site.

Belongs to the PP2C family. Requires Mg(2+) as cofactor. Mn(2+) serves as cofactor.

It carries out the reaction O-phospho-L-seryl-[protein] + H2O = L-seryl-[protein] + phosphate. The enzyme catalyses O-phospho-L-threonyl-[protein] + H2O = L-threonyl-[protein] + phosphate. The polypeptide is Putative protein phosphatase 2C 53 (Arabidopsis thaliana (Mouse-ear cress)).